The primary structure comprises 437 residues: MSIKTLISVLRVTLLTACLLPSLFFVRSAIAGPYIWEVVMYSSSGSSTPAEACEKARVVADRSPDWNYTSATPKMNGLDNSYCSVVYVSRRDPSVVNTCDDCASWKLFRKGDQCANADDTYNASTGICEPPPKECKEGELFPAKGPDSPVVTSGGRNYVGDGGAPTACYQSCEYGGNPSPASCYLVKGSTTTGFCNYILKGTGQSCGADSYTFSQTGDSLNPPDTPNTDPSDPNDPGCPPGWSWSGTTCVKTPTDPTDPTDPTTPGGDGGGDGNGGGNNNGGGNDGGTGNGDGSGGGDGNGAGDGSGDGDGSGTGGDGNGTCDPAKENCSTGPEGPGGELKEPTPGTWDDAIATWEKKVEEAKKELKTKVKANVDQMKGAFDLNLAEGGGQLPCESMTIWGKSYSLCISDYAGQLSSLRVALLLMAALIAALILLKD.

An N-terminal signal peptide occupies residues 1 to 31 (MSIKTLISVLRVTLLTACLLPSLFFVRSAIA). Residues 214-347 (SQTGDSLNPP…GELKEPTPGT (134 aa)) form a disordered region. Low complexity-rich tracts occupy residues 218–235 (DSLN…DPND) and 252–265 (TPTD…PTTP). Gly residues predominate over residues 266–319 (GGDGGGDGNGGGNNNGGGNDGGTGNGDGSGGGDGNGAGDGSGDGDGSGTGGDGN). Residues 415–435 (LSSLRVALLLMAALIAALILL) form a helical membrane-spanning segment.

The protein belongs to the inovirus G3P protein family. Interacts with G6P; this interaction is required for proper integration of G3P and G6P into the virion. Interacts with G8P. Interacts with the tip of the host pilus.

It is found in the virion. The protein resides in the host membrane. In terms of biological role, plays essential roles both in the penetration of the viral genome into the bacterial host via pilus retraction and in the extrusion process. During the initial step of infection, G3P mediates adsorption of the phage to its primary receptor, the tip of host type IV PAK pilus. Attachment of the phage causes pilus retraction bringing the viral particle into close proximity of the host cell inner membrane. Subsequent interaction with a secondary host entry receptor induces penetration of the viral DNA into the host cytoplasm. In the extrusion process, G3P mediates the release of the membrane-anchored virion from the cell via its C-terminal domain. The chain is Attachment protein G3P (III) from Pseudomonas aeruginosa (Bacteriophage Pf1).